A 337-amino-acid chain; its full sequence is Holliday junction branch migration complex subunit RuvB (337 aa).

A large ATPase domain (RuvB-L) region spans residues 1 to 179 (MTHQVSVLHQ…FSFTGRMSYY (179 aa)). Residues L18, R19, G60, K63, T64, S65, 126-128 (EDY), R169, Y179, and R216 each bind ATP. T64 lines the Mg(2+) pocket. Positions 180–250 (SDEDLTTILK…VAEKALAMLL (71 aa)) are small ATPAse domain (RuvB-S). The tract at residues 253–337 (DWGLNEIDIK…DNLQSLGEEK (85 aa)) is head domain (RuvB-H). The DNA site is built by K308 and R313.

Belongs to the RuvB family. In terms of assembly, homohexamer. Forms an RuvA(8)-RuvB(12)-Holliday junction (HJ) complex. HJ DNA is sandwiched between 2 RuvA tetramers; dsDNA enters through RuvA and exits via RuvB. An RuvB hexamer assembles on each DNA strand where it exits the tetramer. Each RuvB hexamer is contacted by two RuvA subunits (via domain III) on 2 adjacent RuvB subunits; this complex drives branch migration. In the full resolvosome a probable DNA-RuvA(4)-RuvB(12)-RuvC(2) complex forms which resolves the HJ.

The protein localises to the cytoplasm. It catalyses the reaction ATP + H2O = ADP + phosphate + H(+). In terms of biological role, the RuvA-RuvB-RuvC complex processes Holliday junction (HJ) DNA during genetic recombination and DNA repair, while the RuvA-RuvB complex plays an important role in the rescue of blocked DNA replication forks via replication fork reversal (RFR). RuvA specifically binds to HJ cruciform DNA, conferring on it an open structure. The RuvB hexamer acts as an ATP-dependent pump, pulling dsDNA into and through the RuvAB complex. RuvB forms 2 homohexamers on either side of HJ DNA bound by 1 or 2 RuvA tetramers; 4 subunits per hexamer contact DNA at a time. Coordinated motions by a converter formed by DNA-disengaged RuvB subunits stimulates ATP hydrolysis and nucleotide exchange. Immobilization of the converter enables RuvB to convert the ATP-contained energy into a lever motion, pulling 2 nucleotides of DNA out of the RuvA tetramer per ATP hydrolyzed, thus driving DNA branch migration. The RuvB motors rotate together with the DNA substrate, which together with the progressing nucleotide cycle form the mechanistic basis for DNA recombination by continuous HJ branch migration. Branch migration allows RuvC to scan DNA until it finds its consensus sequence, where it cleaves and resolves cruciform DNA. This is Holliday junction branch migration complex subunit RuvB from Chlamydia caviae (strain ATCC VR-813 / DSM 19441 / 03DC25 / GPIC) (Chlamydophila caviae).